A 430-amino-acid chain; its full sequence is Tol-Pal system protein TolB (430 aa).

An N-terminal signal peptide occupies residues methionine 1–alanine 26.

The protein belongs to the TolB family. As to quaternary structure, the Tol-Pal system is composed of five core proteins: the inner membrane proteins TolA, TolQ and TolR, the periplasmic protein TolB and the outer membrane protein Pal. They form a network linking the inner and outer membranes and the peptidoglycan layer.

It localises to the periplasm. Functionally, part of the Tol-Pal system, which plays a role in outer membrane invagination during cell division and is important for maintaining outer membrane integrity. The protein is Tol-Pal system protein TolB of Paraburkholderia phytofirmans (strain DSM 17436 / LMG 22146 / PsJN) (Burkholderia phytofirmans).